Reading from the N-terminus, the 203-residue chain is Outer-membrane lipoprotein carrier protein (203 aa).

A signal peptide spans Met-1–Ala-21. The segment at Gln-178–Lys-203 is disordered.

It belongs to the LolA family. In terms of assembly, monomer.

The protein resides in the periplasm. Its function is as follows. Participates in the translocation of lipoproteins from the inner membrane to the outer membrane. Only forms a complex with a lipoprotein if the residue after the N-terminal Cys is not an aspartate (The Asp acts as a targeting signal to indicate that the lipoprotein should stay in the inner membrane). This Salmonella agona (strain SL483) protein is Outer-membrane lipoprotein carrier protein.